A 175-amino-acid polypeptide reads, in one-letter code: Alpha-crystallin B chain (175 aa).

Met1 is modified (N-acetylmethionine). Ser19, Ser45, and Ser59 each carry phosphoserine. The 109-residue stretch at 56 to 164 (RAPSWIDTGL…PERTIPITRE (109 aa)) folds into the sHSP domain. His83 provides a ligand contact to Zn(2+). Residue Lys92 is modified to N6-acetyllysine. Zn(2+)-binding residues include His104, Glu106, His111, and His119. A disordered region spans residues 145 to 175 (VNGPRKQVSGPERTIPITREEKPAVAAAPKK). At Lys166 the chain carries N6-acetyllysine.

It belongs to the small heat shock protein (HSP20) family. In terms of assembly, heteromer composed of three CRYAA and one CRYAB subunits. Aggregates with homologous proteins, including the small heat shock protein HSPB1, to form large heteromeric complexes. Inter-subunit bridging via zinc ions enhances stability, which is crucial as there is no protein turn over in the lens. Interacts with HSPBAP1. Interacts with TTN/titin. Interacts with TMEM109; in the cellular response to DNA damage. Interacts with DES; binds rapidly during early stages of DES filament assembly and a reduced binding seen in the later stages. Interacts with TMED10; the interaction mediates the translocation from the cytoplasm into the ERGIC (endoplasmic reticulum-Golgi intermediate compartment) and thereby secretion. Interacts with ATP6V1A and with MTOR, forming a ternary complex. As to expression, abundantly expressed in the lens of the eye. Expressed in ventricular cardiomyocytes of the heart. Also expressed in skeletal muscle and the kidney.

The protein localises to the cytoplasm. Its subcellular location is the cytosol. It localises to the nucleus. It is found in the secreted. The protein resides in the lysosome. May contribute to the transparency and refractive index of the lens. Has chaperone-like activity, preventing aggregation of various proteins under a wide range of stress conditions. In lens epithelial cells, stabilizes the ATP6V1A protein, preventing its degradation by the proteasome. This chain is Alpha-crystallin B chain, found in Mus musculus (Mouse).